Reading from the N-terminus, the 353-residue chain is Anthranilate phosphoribosyltransferase (353 aa).

5-phospho-alpha-D-ribose 1-diphosphate-binding positions include Gly-86, 89–90, 96–99, 114–122, and Ser-126; these read GD, NVST, and KHGNRAVSG. Gly-86 is a binding site for anthranilate. Ser-98 is a binding site for Mg(2+). Asn-117 provides a ligand contact to anthranilate. An anthranilate-binding site is contributed by Arg-172. Residues Asp-231 and Glu-232 each coordinate Mg(2+).

The protein belongs to the anthranilate phosphoribosyltransferase family. In terms of assembly, homodimer. Mg(2+) serves as cofactor.

The enzyme catalyses N-(5-phospho-beta-D-ribosyl)anthranilate + diphosphate = 5-phospho-alpha-D-ribose 1-diphosphate + anthranilate. Its pathway is amino-acid biosynthesis; L-tryptophan biosynthesis; L-tryptophan from chorismate: step 2/5. Functionally, catalyzes the transfer of the phosphoribosyl group of 5-phosphorylribose-1-pyrophosphate (PRPP) to anthranilate to yield N-(5'-phosphoribosyl)-anthranilate (PRA). The sequence is that of Anthranilate phosphoribosyltransferase from Pseudomonas syringae pv. syringae (strain B728a).